A 187-amino-acid chain; its full sequence is Biphenyl 2,3-dioxygenase subunit beta (187 aa).

Belongs to the bacterial ring-hydroxylating dioxygenase beta subunit family. In terms of assembly, heterohexamer consisting of three BphA1 subunits and three BphA2 subunits. The multicomponent biphenyl dioxygenase system is composed of a ferredoxin reductase (BphA4), a ferredoxin (BphA3), and a terminal oxygenase (BphA1A2).

The catalysed reaction is biphenyl + NADH + O2 + H(+) = (2R,3S)-3-phenylcyclohexa-3,5-diene-1,2-diol + NAD(+). The protein operates within xenobiotic degradation; biphenyl degradation; 2-hydroxy-2,4-pentadienoate and benzoate from biphenyl: step 1/4. Part of the oxygenase component of the biphenyl dioxygenase system that catalyzes the stereospecific dihydroxylation of the aromatic ring of biphenyl, yielding a dihydrodiol compound. Is likely involved in biphenyl degradation that allows growth of Rhodococcus sp. strain RHA1 on biphenyl as the sole source of carbon and energy. Can also use naphtalene and 4-chlorobiphenyl (4-CB) as substrates, as well as some polychlorinated biphenyls (PCB) such as 2,2'-dichlorobiphenyl, 2,3-dichlorobiphenyl and 2,5,2'-trichlorobiphenyl. Exhibits weak activity toward dibenzofuran and dibenzo-p-dioxin. Electrons are transferred from NADH to the [2Fe-2S] cluster in BphA1 via FAD of BphA4 and [2Fe-2S] cluster of BphA3. The sequence is that of Biphenyl 2,3-dioxygenase subunit beta from Rhodococcus jostii (strain RHA1).